The following is a 211-amino-acid chain: WAP four-disulfide core domain protein 1 (211 aa).

A signal peptide spans 1 to 23 (MGNCGRKVLRALSFLLLLGSSSA). In terms of domain architecture, WAP spans 50–99 (RQPHADRCPPPPRTLPPGACQATRCQADSECPRHRRCCYNGCAYACLEAV). 4 disulfide bridges follow: Cys57–Cys87, Cys69–Cys91, Cys74–Cys86, and Cys80–Cys95. Over residues 182-198 (VLRQRLHKEYPEGDSKN) the composition is skewed to basic and acidic residues. A disordered region spans residues 182–211 (VLRQRLHKEYPEGDSKNVAEPGKGQQRHFP).

It localises to the secreted. Functionally, has growth inhibitory activity. This Mus musculus (Mouse) protein is WAP four-disulfide core domain protein 1 (Wfdc1).